Here is a 92-residue protein sequence, read N- to C-terminus: Large ribosomal subunit protein bL25 (92 aa).

Belongs to the bacterial ribosomal protein bL25 family. In terms of assembly, part of the 50S ribosomal subunit; part of the 5S rRNA/L5/L18/L25 subcomplex. Contacts the 5S rRNA. Binds to the 5S rRNA independently of L5 and L18.

This is one of the proteins that binds to the 5S RNA in the ribosome where it forms part of the central protuberance. The sequence is that of Large ribosomal subunit protein bL25 from Photobacterium profundum (strain SS9).